The sequence spans 51 residues: DNA-binding protein (51 aa).

The segment at 1-51 (MVYRRRRSRSADGTYTRRRRSSGYRRRPGRPRTYRRSRSATRRSGYRRRRY) is disordered. Tandem repeats lie at residues 5–10 (RRRSRS) and 17–22 (RRRRSS). The interval 5–22 (RRRSRSADGTYTRRRRSS) is 2 X 6 AA repeats of R-R-R-R-S-S. Residues 16–51 (TRRRRSSGYRRRPGRPRTYRRSRSATRRSGYRRRRY) show a composition bias toward basic residues.

Probably phosphorylated in infected cells.

It localises to the virion. In terms of biological role, thought to be responsible for DNA condensation during packaging of the nucleocapsids. This chain is DNA-binding protein (P6.5), found in Orgyia pseudotsugata (Douglas-fir tussock moth).